A 133-amino-acid chain; its full sequence is Small ribosomal subunit protein uS11 (133 aa).

Residues 1 to 23 are disordered; that stretch reads MPPKTRGAVRKPRKKDKKNIALG. A compositionally biased stretch (basic residues) spans 7–17; sequence GAVRKPRKKDK.

It belongs to the universal ribosomal protein uS11 family. In terms of assembly, part of the 30S ribosomal subunit. Interacts with proteins S7 and S18. Binds to IF-3.

Located on the platform of the 30S subunit, it bridges several disparate RNA helices of the 16S rRNA. Forms part of the Shine-Dalgarno cleft in the 70S ribosome. This is Small ribosomal subunit protein uS11 from Arthrobacter sp. (strain FB24).